The primary structure comprises 267 residues: Tryptophan synthase alpha chain (267 aa).

Residues Glu-51 and Asp-62 each act as proton acceptor in the active site.

The protein belongs to the TrpA family. In terms of assembly, tetramer of two alpha and two beta chains.

The catalysed reaction is (1S,2R)-1-C-(indol-3-yl)glycerol 3-phosphate + L-serine = D-glyceraldehyde 3-phosphate + L-tryptophan + H2O. It participates in amino-acid biosynthesis; L-tryptophan biosynthesis; L-tryptophan from chorismate: step 5/5. Its function is as follows. The alpha subunit is responsible for the aldol cleavage of indoleglycerol phosphate to indole and glyceraldehyde 3-phosphate. This chain is Tryptophan synthase alpha chain, found in Prochlorococcus marinus (strain SARG / CCMP1375 / SS120).